We begin with the raw amino-acid sequence, 253 residues long: CD151 antigen (253 aa).

Residues 1 to 18 lie on the Cytoplasmic side of the membrane; it reads MGEFNEKKATCGTVCLKY. S-palmitoyl cysteine attachment occurs at residues cysteine 11 and cysteine 15. The helical transmembrane segment at 19-39 threads the bilayer; sequence LLFTYNCCFWLAGLAVMAVGI. Over 40–57 the chain is Extracellular; it reads WTLALKSDYISLLASSTY. The helical transmembrane segment at 58–78 threads the bilayer; that stretch reads LATAYILVVAGVVVMVTGVLG. Topologically, residues 79-91 are cytoplasmic; that stretch reads CCATFKERRNLLR. Residues 92 to 112 form a helical membrane-spanning segment; that stretch reads LYFILLLIIFLLEIIAGILAY. The Extracellular portion of the chain corresponds to 113-221; it reads VYYQQLNTEL…LETFIQEHLR (109 aa). An N-linked (GlcNAc...) asparagine glycan is attached at asparagine 159. Residues 222 to 242 form a helical membrane-spanning segment; the sequence is VIGAVGIGIACVQVFGMIFTC. S-palmitoyl cysteine attachment occurs at residues cysteine 242 and cysteine 243. The Cytoplasmic segment spans residues 243–253; it reads CLYRSLKLEHY.

It belongs to the tetraspanin (TM4SF) family. As to quaternary structure, interacts with integrins ITGA3:ITGB1, ITGA5:ITGB1, ITGA3:ITGB1 and ITGA6:ITGB4 and with CD9 and CD181. Interacts (via the second extracellular domain) with integrin ITGAV:ITGB3. Interacts with ITGA3; this interaction modulates ITGA3 glycosylation pattern. Interacts with F11R. Interacts with RAC1 and CDC42; these interactions mediate physical association of RAC1 and CDC42 with integrin adhesion receptor complexes. Post-translationally, palmitoylated. Palmitoylation by ZDHHC2 regulates CD151 expression, association with other tetraspanin family proteins and function in cell adhesion. In terms of processing, ubiquitinated by RNF128 on lysine residues present in the tetraspanin amino terminus via 'Lys-48'-linked ubiquitin leading to proteasomal degradation.

Its subcellular location is the cell membrane. In terms of biological role, structural component of specialized membrane microdomains known as tetraspanin-enriched microdomains (TERMs), which act as platforms for receptor clustering and signaling. Plays a role in various cellular and molecular mechanism through its association with both integrin and non-integrin proteins. These interactions facilitate critical cellular functions, including cell-to-cell communication, wound healing, platelet aggregation, trafficking, cell motility, and angiogenesis. Via interaction with JAM-A/F11R and integrin ITGA3:ITGB1, promotes the recruitment of signaling molecules such as RAC1, CDC42 and RhoGTPases to facilitate the polarization of epithelial cells and the reorganization of the actin cytoskeleton, which are critical steps in cell migration process. Regulates the glycosylation pattern of ITGA3:ITGB1 thereby modulating its activity. Plays an essential role in the maintenance of central laminin-binding integrin ITGA6:ITGB4-containing adhesion complexes. Essential for the proper assembly of the glomerular and tubular basement membranes in kidney. Contributes to T-cell activation by modulating integrin signaling leading to activation of downstream targets PTK2 and MAPK1/MAPK3. This Mus musculus (Mouse) protein is CD151 antigen (Cd151).